The chain runs to 127 residues: Holo-[acyl-carrier-protein] synthase (127 aa).

Asp-9 and Glu-58 together coordinate Mg(2+).

Belongs to the P-Pant transferase superfamily. AcpS family. It depends on Mg(2+) as a cofactor.

Its subcellular location is the cytoplasm. The enzyme catalyses apo-[ACP] + CoA = holo-[ACP] + adenosine 3',5'-bisphosphate + H(+). Functionally, transfers the 4'-phosphopantetheine moiety from coenzyme A to a Ser of acyl-carrier-protein. In Shewanella sp. (strain ANA-3), this protein is Holo-[acyl-carrier-protein] synthase.